The primary structure comprises 366 residues: Chorismate synthase (366 aa).

R48 is an NADP(+) binding site. FMN is bound by residues 125–127, 238–239, G278, 293–297, and R319; these read RSS, NA, and KPTSS.

This sequence belongs to the chorismate synthase family. Homotetramer. FMNH2 is required as a cofactor.

The enzyme catalyses 5-O-(1-carboxyvinyl)-3-phosphoshikimate = chorismate + phosphate. Its pathway is metabolic intermediate biosynthesis; chorismate biosynthesis; chorismate from D-erythrose 4-phosphate and phosphoenolpyruvate: step 7/7. Functionally, catalyzes the anti-1,4-elimination of the C-3 phosphate and the C-6 proR hydrogen from 5-enolpyruvylshikimate-3-phosphate (EPSP) to yield chorismate, which is the branch point compound that serves as the starting substrate for the three terminal pathways of aromatic amino acid biosynthesis. This reaction introduces a second double bond into the aromatic ring system. In Hydrogenovibrio crunogenus (strain DSM 25203 / XCL-2) (Thiomicrospira crunogena), this protein is Chorismate synthase.